A 65-amino-acid chain; its full sequence is Large ribosomal subunit protein bL35 (65 aa).

This sequence belongs to the bacterial ribosomal protein bL35 family.

The sequence is that of Large ribosomal subunit protein bL35 from Baumannia cicadellinicola subsp. Homalodisca coagulata.